The chain runs to 358 residues: Neutral protease 2 homolog PABG_02362 (358 aa).

Residues 1–19 (MRRVSGILAVAAFTISAFA) form the signal peptide. Positions 20–182 (GVIQPVAKDA…FAAMNQFVKI (163 aa)) are excised as a propeptide. 2 disulfide bridges follow: cysteine 188–cysteine 259 and cysteine 266–cysteine 284. Residue asparagine 249 is glycosylated (N-linked (GlcNAc...) asparagine). A Zn(2+)-binding site is contributed by histidine 309. Glutamate 310 is a catalytic residue. The Zn(2+) site is built by histidine 313 and aspartate 324.

This sequence belongs to the peptidase M35 family. It depends on Zn(2+) as a cofactor.

It is found in the secreted. It catalyses the reaction Preferential cleavage of bonds with hydrophobic residues in P1'. Also 3-Asn-|-Gln-4 and 8-Gly-|-Ser-9 bonds in insulin B chain.. Its function is as follows. Secreted metalloproteinase that allows assimilation of proteinaceous substrates. Shows high activities on basic nuclear substrates such as histone and protamine. The chain is Neutral protease 2 homolog PABG_02362 from Paracoccidioides brasiliensis (strain Pb03).